A 169-amino-acid polypeptide reads, in one-letter code: Aspartic protease inhibitor 3 (169 aa).

Asparagine 1 carries N-linked (GlcNAc...) asparagine glycosylation. Cystine bridges form between cysteine 30–cysteine 75 and cysteine 124–cysteine 134.

The protein belongs to the protease inhibitor I3 (leguminous Kunitz-type inhibitor) family.

The protein resides in the vacuole. Functionally, inhibitor of cathepsin D (aspartic protease). May also inhibit trypsin and chymotrypsin (serine proteases). Protects the plant by inhibiting proteases of invading organisms. The protein is Aspartic protease inhibitor 3 of Solanum tuberosum (Potato).